The primary structure comprises 208 residues: N-(5'-phosphoribosyl)anthranilate isomerase (208 aa).

This sequence belongs to the TrpF family.

It carries out the reaction N-(5-phospho-beta-D-ribosyl)anthranilate = 1-(2-carboxyphenylamino)-1-deoxy-D-ribulose 5-phosphate. It functions in the pathway amino-acid biosynthesis; L-tryptophan biosynthesis; L-tryptophan from chorismate: step 3/5. This Neisseria gonorrhoeae (strain ATCC 700825 / FA 1090) protein is N-(5'-phosphoribosyl)anthranilate isomerase.